Here is a 256-residue protein sequence, read N- to C-terminus: Venom allergen-1 (256 aa).

Positions 1-21 are cleaved as a signal peptide; the sequence is MAFNGIALLITATIFIGSCYA. One can recognise an SCP domain in the interval 65–211; that stretch reads LNTHNKLRAE…MINYYLVCNY (147 aa). Asn146 and Asn210 each carry an N-linked (GlcNAc...) asparagine glycan.

The protein belongs to the CRISP family.

It localises to the secreted. Its function is as follows. Activates autophagy in human monocytic cells, dendritic cells and macrophages. Functionally, (Microbial infection) Promotes Zika virus replication in human dendritic cells and macrophages. Facilitates Zika virus transmission from infected mosquitoes to the host in mouse model. In Aedes albopictus (Asian tiger mosquito), this protein is Venom allergen-1.